A 300-amino-acid polypeptide reads, in one-letter code: uncharacterized protein (300 aa).

A divalent metal cation is bound by residues glutamate 146, glutamate 148, and aspartate 177.

Belongs to the FAH family.

This is an uncharacterized protein from Staphylococcus aureus (strain MW2).